Consider the following 677-residue polypeptide: MSQSARKILVTNALPYANGPIHIGHMLGYIQADIWVRFQKLRGNECHFVCADDAHGTPIMLKAQQLGITPEQMIGDMQRSHESDFSDFLVGFDHYYSTHSDENRELAETIYTRLDKAGHIKTKVIEQLYDPQKEMFLPDRFVKGECPDCGAEDQYGDNCDVCGATYAPTDLKNPKSVVSGAEPELRESEHYFFDLPAFGDMLKSWTRSGSLQNEMANKLNEWFEQGLQRWDISRDAPYFGFKIPGTENKYFYVWLDAPIGYMSSFKNYCSTTGKADWDTYWQADSEAELYHFIGKDIIYFHSLFWPAMLKGADFRQPTNVWAHGFITVNGTKMSKSKGTFIKARTYLEHLDPEYLRYYFAAKLTSRIDDLDLNLTDFAQRVNSDLVGKVINIASRCAGFIQKKFDGRLSSNVADSALLEDFQLAGDNIAELYEKREFSRAMRDIMALADRANQYIADKEPWQLIKQEGSEQEVHEICSLGINLFRVLMVYLAPVVPKLTEEVQSFLNDNFTWDSHKTALTDHPIDKFKALMQRVEMDDVNAMIDASKEEQASQTPAVEANDELKKEPIADEISFDDFAKVDLRVARIANAEHVEGADKLLKLTLDLGGETRQVFAGIKSAYDPEALKGQLTVMVANLAPRKMRFGLSEGMVLAAGPGKDEIYILNPHDGAKPGMRIM.

The 'HIGH' region signature appears at 15-25; it reads PYANGPIHIGH. Residues Cys146, Cys149, Cys159, and Cys162 each coordinate Zn(2+). The 'KMSKS' region signature appears at 332–336; the sequence is KMSKS. Residue Lys335 participates in ATP binding. The region spanning 576-677 is the tRNA-binding domain; it reads DFAKVDLRVA…DGAKPGMRIM (102 aa).

It belongs to the class-I aminoacyl-tRNA synthetase family. MetG type 1 subfamily. Homodimer. Zn(2+) is required as a cofactor.

The protein localises to the cytoplasm. The catalysed reaction is tRNA(Met) + L-methionine + ATP = L-methionyl-tRNA(Met) + AMP + diphosphate. In terms of biological role, is required not only for elongation of protein synthesis but also for the initiation of all mRNA translation through initiator tRNA(fMet) aminoacylation. The protein is Methionine--tRNA ligase of Idiomarina loihiensis (strain ATCC BAA-735 / DSM 15497 / L2-TR).